The following is a 396-amino-acid chain: Purple acid phosphatase 5 (396 aa).

An N-terminal signal peptide occupies residues 1-13 (MSLETFPPPAGYN). N-linked (GlcNAc...) asparagine glycosylation is present at Asn58. Residue Asp125 coordinates Fe cation. N-linked (GlcNAc...) asparagine glycosylation is present at Asn133. 2 residues coordinate Fe cation: Asp153 and Tyr156. Asp153 contributes to the Zn(2+) binding site. Asn190 contributes to the Zn(2+) binding site. Asn190 provides a ligand contact to substrate. The N-linked (GlcNAc...) asparagine glycan is linked to Asn238. His250 provides a ligand contact to Zn(2+). His260 functions as the Proton donor in the catalytic mechanism. Residue His287 coordinates Zn(2+). Residue 287-289 (HVH) coordinates substrate. His289 is a binding site for Fe cation. N-linked (GlcNAc...) asparagine glycosylation is found at Asn303 and Asn360.

Belongs to the metallophosphoesterase superfamily. Purple acid phosphatase family. Homodimer. It depends on Fe cation as a cofactor. Zn(2+) serves as cofactor.

It localises to the secreted. The catalysed reaction is a phosphate monoester + H2O = an alcohol + phosphate. The protein is Purple acid phosphatase 5 (PAP5) of Arabidopsis thaliana (Mouse-ear cress).